We begin with the raw amino-acid sequence, 287 residues long: Glutamate racemase (287 aa).

Substrate contacts are provided by residues 32 to 33 and 64 to 65; these read DS and YG. The active-site Proton donor/acceptor is Cys96. 97 to 98 serves as a coordination point for substrate; sequence NT. The active-site Proton donor/acceptor is the Cys208. Residue 209–210 participates in substrate binding; sequence TH.

It belongs to the aspartate/glutamate racemases family.

It catalyses the reaction L-glutamate = D-glutamate. It participates in cell wall biogenesis; peptidoglycan biosynthesis. Functionally, provides the (R)-glutamate required for cell wall biosynthesis. The protein is Glutamate racemase of Yersinia enterocolitica serotype O:8 / biotype 1B (strain NCTC 13174 / 8081).